The primary structure comprises 891 residues: Microtubule-associated protein 10 (891 aa).

4 disordered regions span residues Ala325 to Ile355, Glu401 to Gly457, Ser504 to Cys679, and Thr702 to Ser844. Residues Pro407–Ser417 are compositionally biased toward low complexity. 2 stretches are compositionally biased toward polar residues: residues Val509 to Pro520 and Pro527 to Pro544. Basic and acidic residues-rich tracts occupy residues Ser577–Met592 and Thr645–Gln658. Polar residues-rich tracts occupy residues Ala665–Cys679, Thr702–Gly718, Ser726–Leu749, Glu776–Thr790, and Lys826–Ser844.

Interacts (via middle region) with microtubules.

The protein localises to the cytoplasm. Its subcellular location is the cytoskeleton. The protein resides in the spindle pole. It localises to the microtubule organizing center. It is found in the centrosome. The protein localises to the midbody. Functionally, microtubule-associated protein (MAP) that plays a role in the regulation of cell division; promotes microtubule stability and participates in the organization of the spindle midzone and normal progress of cytokinesis. This Mus musculus (Mouse) protein is Microtubule-associated protein 10 (Map10).